The following is a 51-amino-acid chain: Insulin (51 aa).

Disulfide bonds link cysteine 8/cysteine 37, cysteine 20/cysteine 50, and cysteine 36/cysteine 41.

Belongs to the insulin family. As to quaternary structure, heterodimer of a B chain and an A chain linked by two disulfide bonds.

It is found in the secreted. In terms of biological role, insulin decreases blood glucose concentration. It increases cell permeability to monosaccharides, amino acids and fatty acids. It accelerates glycolysis, the pentose phosphate cycle, and glycogen synthesis in liver. This Pagrus major (Red sea bream) protein is Insulin.